The primary structure comprises 157 residues: Protein-export protein SecB (157 aa).

This sequence belongs to the SecB family. As to quaternary structure, homotetramer, a dimer of dimers. One homotetramer interacts with 1 SecA dimer.

The protein resides in the cytoplasm. In terms of biological role, one of the proteins required for the normal export of preproteins out of the cell cytoplasm. It is a molecular chaperone that binds to a subset of precursor proteins, maintaining them in a translocation-competent state. It also specifically binds to its receptor SecA. This Shewanella oneidensis (strain ATCC 700550 / JCM 31522 / CIP 106686 / LMG 19005 / NCIMB 14063 / MR-1) protein is Protein-export protein SecB.